The sequence spans 112 residues: MINLHRLCIIHVVATLLSTLLSLISVAISATCKDEKGKQEMETGQQPSGLSATLTKVKCAKRQKTVVRVRFYMLSMKNKACRKNLSKGYNQRPEGSKEESHMVVKEKRKGDH.

A signal peptide spans 1–29 (MINLHRLCIIHVVATLLSTLLSLISVAIS). N-linked (GlcNAc...) asparagine glycosylation occurs at N84. The interval 84 to 112 (NLSKGYNQRPEGSKEESHMVVKEKRKGDH) is disordered. A compositionally biased stretch (basic and acidic residues) spans 94-112 (EGSKEESHMVVKEKRKGDH).

The protein localises to the secreted. This is an uncharacterized protein from Homo sapiens (Human).